Consider the following 679-residue polypeptide: Protein hook (679 aa).

The Calponin-homology (CH) domain occupies 6–123 (NEMYYSLLEW…RLLQLVLGCA (118 aa)). 2 coiled-coil regions span residues 135 to 437 (EIMC…LKCG) and 480 to 574 (QTAL…QEIL).

Belongs to the hook family. Homodimer. Interacts with microtubules via its N-terminus.

The protein resides in the cytoplasm. Its subcellular location is the cytoskeleton. It is found in the endosome. It localises to the synapse. Its function is as follows. Involved in endocytic trafficking by stabilizing organelles of the endocytic pathway. Probably acts as a cytoskeletal linker protein required to tether endosome vesicles to the cytoskeleton. Involved in modulation of endocytosis at stages required for down-regulation of membrane proteins that control synapse size. Not involved in synaptic vesicle recycling. Required in R7 cells for boss endocytosis into multivesicular bodies (MVBs). Has a role in regulating adult longevity. The protein is Protein hook of Drosophila yakuba (Fruit fly).